We begin with the raw amino-acid sequence, 149 residues long: Ribonuclease pancreatic (149 aa).

The first 25 residues, 1–25 (MGLEKSFILFSLLVLVLGWVQPSLG), serve as a signal peptide directing secretion. 2 residues coordinate substrate: Lys32 and Arg35. Residue His37 is the Proton acceptor of the active site. 4 disulfides stabilise this stretch: Cys51-Cys109, Cys65-Cys120, Cys83-Cys135, and Cys90-Cys97. Residues 66–70 (KPVNT), Lys91, and Arg110 contribute to the substrate site. His144 acts as the Proton donor in catalysis.

It belongs to the pancreatic ribonuclease family. As to quaternary structure, monomer. Interacts with and forms tight 1:1 complexes with RNH1. Dimerization of two such complexes may occur. Interaction with RNH1 inhibits this protein. In terms of tissue distribution, pancreas.

Its subcellular location is the secreted. The enzyme catalyses an [RNA] containing cytidine + H2O = an [RNA]-3'-cytidine-3'-phosphate + a 5'-hydroxy-ribonucleotide-3'-[RNA].. It carries out the reaction an [RNA] containing uridine + H2O = an [RNA]-3'-uridine-3'-phosphate + a 5'-hydroxy-ribonucleotide-3'-[RNA].. Endonuclease that catalyzes the cleavage of RNA on the 3' side of pyrimidine nucleotides. Acts on single-stranded and double-stranded RNA. This Leopoldamys edwardsi (Edwards's long-tailed giant rat) protein is Ribonuclease pancreatic (RNASE1).